Here is an 89-residue protein sequence, read N- to C-terminus: Small ribosomal subunit protein uS14 (89 aa).

Belongs to the universal ribosomal protein uS14 family. As to quaternary structure, part of the 30S ribosomal subunit. Contacts proteins S3 and S10.

Functionally, binds 16S rRNA, required for the assembly of 30S particles and may also be responsible for determining the conformation of the 16S rRNA at the A site. In Chlorobium phaeobacteroides (strain BS1), this protein is Small ribosomal subunit protein uS14.